Consider the following 389-residue polypeptide: S-adenosylmethionine synthase 2 (389 aa).

ATP is bound at residue His17. Asp19 contacts Mg(2+). Glu45 contacts K(+). Residues Glu58 and Gln102 each coordinate L-methionine. The interval 102–112 (QSADIAVGVDA) is flexible loop. Residues 166 to 168 (DSK), 231 to 232 (RF), Asp240, 246 to 247 (RK), Ala263, and Lys267 contribute to the ATP site. Position 240 (Asp240) interacts with L-methionine. Residue Lys271 participates in L-methionine binding.

The protein belongs to the AdoMet synthase family. As to quaternary structure, homotetramer; dimer of dimers. Requires Mg(2+) as cofactor. K(+) is required as a cofactor.

The protein resides in the cytoplasm. It catalyses the reaction L-methionine + ATP + H2O = S-adenosyl-L-methionine + phosphate + diphosphate. It functions in the pathway amino-acid biosynthesis; S-adenosyl-L-methionine biosynthesis; S-adenosyl-L-methionine from L-methionine: step 1/1. Functionally, catalyzes the formation of S-adenosylmethionine (AdoMet) from methionine and ATP. The overall synthetic reaction is composed of two sequential steps, AdoMet formation and the subsequent tripolyphosphate hydrolysis which occurs prior to release of AdoMet from the enzyme. This is S-adenosylmethionine synthase 2 from Rhodospirillum rubrum (strain ATCC 11170 / ATH 1.1.1 / DSM 467 / LMG 4362 / NCIMB 8255 / S1).